The primary structure comprises 135 residues: Interleukin-4 (135 aa).

Residues 1-24 form the signal peptide; that stretch reads MGLTSQLIPALVCLLVCTSHFVHG. Cystine bridges form between Cys-27-Cys-135, Cys-48-Cys-85, and Cys-70-Cys-105. Residues Asn-62 and Asn-96 are each glycosylated (N-linked (GlcNAc...) asparagine).

The protein belongs to the IL-4/IL-13 family.

The protein resides in the secreted. In terms of biological role, participates in at least several B-cell activation processes as well as of other cell types. It is a costimulator of DNA-synthesis. It induces the expression of class II MHC molecules on resting B-cells. It enhances both secretion and cell surface expression of IgE and IgG1. It also regulates the expression of the low affinity Fc receptor for IgE (CD23) on both lymphocytes and monocytes. Positively regulates IL31RA expression in macrophages. Stimulates autophagy in dendritic cells by interfering with mTORC1 signaling and through the induction of RUFY4. This is Interleukin-4 (IL4) from Capra hircus (Goat).